An 85-amino-acid chain; its full sequence is ATP synthase subunit c (85 aa).

2 helical membrane passes run 20 to 40 (LGAGIAVFALAGVGMGLGNIF) and 65 to 85 (FALTEAVALFALLIAFLILFA).

The protein belongs to the ATPase C chain family. As to quaternary structure, F-type ATPases have 2 components, F(1) - the catalytic core - and F(0) - the membrane proton channel. F(1) has five subunits: alpha(3), beta(3), gamma(1), delta(1), epsilon(1). F(0) has three main subunits: a(1), b(2) and c(10-14). The alpha and beta chains form an alternating ring which encloses part of the gamma chain. F(1) is attached to F(0) by a central stalk formed by the gamma and epsilon chains, while a peripheral stalk is formed by the delta and b chains.

It localises to the cell inner membrane. Functionally, f(1)F(0) ATP synthase produces ATP from ADP in the presence of a proton or sodium gradient. F-type ATPases consist of two structural domains, F(1) containing the extramembraneous catalytic core and F(0) containing the membrane proton channel, linked together by a central stalk and a peripheral stalk. During catalysis, ATP synthesis in the catalytic domain of F(1) is coupled via a rotary mechanism of the central stalk subunits to proton translocation. Its function is as follows. Key component of the F(0) channel; it plays a direct role in translocation across the membrane. A homomeric c-ring of between 10-14 subunits forms the central stalk rotor element with the F(1) delta and epsilon subunits. This is ATP synthase subunit c from Gluconobacter oxydans (strain 621H) (Gluconobacter suboxydans).